We begin with the raw amino-acid sequence, 145 residues long: ATP synthase epsilon chain (145 aa).

Basic and acidic residues predominate over residues 93 to 104 (AEAEKARARAQE). The segment at 93-113 (AEAEKARARAQEALKNPDASK) is disordered.

Belongs to the ATPase epsilon chain family. As to quaternary structure, F-type ATPases have 2 components, CF(1) - the catalytic core - and CF(0) - the membrane proton channel. CF(1) has five subunits: alpha(3), beta(3), gamma(1), delta(1), epsilon(1). CF(0) has three main subunits: a, b and c.

The protein localises to the cell inner membrane. In terms of biological role, produces ATP from ADP in the presence of a proton gradient across the membrane. The chain is ATP synthase epsilon chain from Francisella philomiragia subsp. philomiragia (strain ATCC 25017 / CCUG 19701 / FSC 153 / O#319-036).